The chain runs to 291 residues: N-acetylmannosamine kinase (291 aa).

ATP-binding positions include 5–12 (AIDIGGTK) and 132–139 (GVGGGVVC). Residues His-156, Cys-166, Cys-168, and Cys-173 each coordinate Zn(2+).

The protein belongs to the ROK (NagC/XylR) family. NanK subfamily. As to quaternary structure, homodimer.

It catalyses the reaction an N-acyl-D-mannosamine + ATP = an N-acyl-D-mannosamine 6-phosphate + ADP + H(+). Its pathway is amino-sugar metabolism; N-acetylneuraminate degradation; D-fructose 6-phosphate from N-acetylneuraminate: step 2/5. Functionally, catalyzes the phosphorylation of N-acetylmannosamine (ManNAc) to ManNAc-6-P. This is N-acetylmannosamine kinase from Salmonella heidelberg (strain SL476).